A 407-amino-acid polypeptide reads, in one-letter code: Enolase-binding protein (407 aa).

The first 24 residues, 1 to 24, serve as a signal peptide directing secretion; the sequence is MALGNALYPLTATVFLCVVGFATS. Residues 25–366 are Extracellular-facing; the sequence is SNENSRFLIN…FGQAYPGFRN (342 aa). N-linked (GlcNAc...) asparagine glycosylation is found at Asn52, Asn78, Asn161, and Asn250. Residues 367 to 387 form a helical membrane-spanning segment; the sequence is VAIGAAILFFSVLGVAIIDMI. Residues 388–407 are Cytoplasmic-facing; the sequence is RRTIANRRAKRLHLGKYSRT.

In terms of assembly, (Microbial infection) Interacts with ENO/enolase from parasites P.berghei and P.falciparum. Expressed in the female midgut epithelium.

Its subcellular location is the cell membrane. Functionally, (Microbial infection) Acts as a receptor for ENO/enolase from parasites P.berghei and P.falciparum. The interaction is involved in the invasion of the mosquito midgut by P.berghei ookinete, but is dispensable for P.falciparum ookinete invasion. The chain is Enolase-binding protein from Anopheles gambiae (African malaria mosquito).